Reading from the N-terminus, the 325-residue chain is Diacylglycerol acyltransferase/mycolyltransferase Ag85B (325 aa).

Residues 1–40 form the signal peptide; it reads MTDVSRKIRAWGRRLMIGTAAAVVLPGLVGLAGGAATAGA. 82–83 is a substrate binding site; sequence LR. The interval 98-108 is fibronectin-binding; the sequence is FEWYYQSGLSI. Cys-127 and Cys-132 are oxidised to a cystine. Positions 166 and 194 each coordinate substrate. Ser-166 serves as the catalytic Nucleophile. Glu-270 is a catalytic residue. Substrate is bound by residues 272-275, Lys-279, and 302-304; these read FVRS and HSW. The active site involves His-302.

It belongs to the mycobacterial A85 antigen family.

The protein resides in the secreted. It carries out the reaction 2 alpha,alpha'-trehalose 6-mycolate = alpha,alpha'-trehalose 6,6'-bismycolate + alpha,alpha-trehalose. It catalyses the reaction an acyl-CoA + a 1,2-diacyl-sn-glycerol = a triacyl-sn-glycerol + CoA. Functionally, the antigen 85 proteins (FbpA, FbpB, FbpC) are responsible for the high affinity of mycobacteria for fibronectin, a large adhesive glycoprotein, which facilitates the attachment of M.tuberculosis to murine alveolar macrophages (AMs). They also help to maintain the integrity of the cell wall by catalyzing the transfer of mycolic acids to cell wall arabinogalactan and through the synthesis of alpha,alpha-trehalose dimycolate (TDM, cord factor). They catalyze the transfer of a mycoloyl residue from one molecule of alpha,alpha-trehalose monomycolate (TMM) to another TMM, leading to the formation of TDM. This Mycobacterium tuberculosis (strain ATCC 25177 / H37Ra) protein is Diacylglycerol acyltransferase/mycolyltransferase Ag85B (fbpB).